A 163-amino-acid polypeptide reads, in one-letter code: ATP synthase subunit b' (163 aa).

The helical transmembrane segment at 28-45 (LMAIQFLLLALILNATLY) threads the bilayer.

Belongs to the ATPase B chain family. F-type ATPases have 2 components, F(1) - the catalytic core - and F(0) - the membrane proton channel. F(1) has five subunits: alpha(3), beta(3), gamma(1), delta(1), epsilon(1). F(0) has four main subunits: a(1), b(1), b'(1) and c(10-14). The alpha and beta chains form an alternating ring which encloses part of the gamma chain. F(1) is attached to F(0) by a central stalk formed by the gamma and epsilon chains, while a peripheral stalk is formed by the delta, b and b' chains.

The protein resides in the cellular thylakoid membrane. Functionally, f(1)F(0) ATP synthase produces ATP from ADP in the presence of a proton or sodium gradient. F-type ATPases consist of two structural domains, F(1) containing the extramembraneous catalytic core and F(0) containing the membrane proton channel, linked together by a central stalk and a peripheral stalk. During catalysis, ATP synthesis in the catalytic domain of F(1) is coupled via a rotary mechanism of the central stalk subunits to proton translocation. In terms of biological role, component of the F(0) channel, it forms part of the peripheral stalk, linking F(1) to F(0). The b'-subunit is a diverged and duplicated form of b found in plants and photosynthetic bacteria. This is ATP synthase subunit b' from Nostoc sp. (strain PCC 7120 / SAG 25.82 / UTEX 2576).